Reading from the N-terminus, the 675-residue chain is Protein C-mannosyl-transferase DPY19L1 (675 aa).

The interval 1-22 (MEGRPPPEGRPPPRPRTGRAPR) is disordered. A run of 11 helical transmembrane segments spans residues 66 to 88 (LYYS…WMIM), 156 to 176 (ACFY…LFFI), 186 to 208 (LGGL…VMWT), 236 to 254 (LYRG…FMLP), 260 to 279 (FVLL…GYID), 286 to 303 (IIYI…LMFG), 309 to 325 (TSYY…ILAM), 334 to 354 (VSEL…TVIL), 414 to 434 (VVLV…WGVL), 449 to 469 (GELV…ILIM), and 491 to 511 (LFGW…ILAA).

The protein belongs to the dpy-19 family. In terms of tissue distribution, widely expressed.

The protein localises to the endoplasmic reticulum membrane. The catalysed reaction is L-tryptophyl-[protein] + a di-trans,poly-cis-dolichyl beta-D-mannosyl phosphate = C-alpha-D-mannosyl-L-tryptophyl-[protein] + a di-trans,poly-cis-dolichyl phosphate + H(+). Its pathway is protein modification; protein glycosylation. C-mannosyltransferase that mediates the C-mannosylation tryptophan residues on target proteins. The reaction occurs on the luminal side of the endoplasmic reticulum and involves the transfer of a mannose unit from a dolichylphosphate mannose (Dol-P-Man) donor to an acceptor protein containing a WxxW consensus sequence. C-mannosylates the first two tryptophans in the WxxWxxWxxC motif in thrombospondin (TSP) type-1 of UNC5A. Regulates neurite extension during development. This Homo sapiens (Human) protein is Protein C-mannosyl-transferase DPY19L1 (DPY19L1).